The chain runs to 201 residues: MSRYRGPRLKKIRRLGALPGLTRKTPKSGSNLKKKFHSGKKEQYRIRLQEKQKLRFHYGLTERQLLRYVHIAGKAKRSTGQVLLQLLEMRLDNILFRLGMASTIPGARQLVNHRHILVNGRIVNIPSFRCKPRDIITTKDNQRSKGLVQNYIASSDPGKLPKHLTIDTLEYKGLVNKILDRKWVGLKINELLVVEYYSRQT.

Residues 17–36 (ALPGLTRKTPKSGSNLKKKF) form a disordered region. An S4 RNA-binding domain is found at 89-157 (MRLDNILFRL…VQNYIASSDP (69 aa)).

This sequence belongs to the universal ribosomal protein uS4 family. In terms of assembly, part of the 30S ribosomal subunit. Contacts protein S5. The interaction surface between S4 and S5 is involved in control of translational fidelity.

It is found in the plastid. It localises to the chloroplast. Functionally, one of the primary rRNA binding proteins, it binds directly to 16S rRNA where it nucleates assembly of the body of the 30S subunit. With S5 and S12 plays an important role in translational accuracy. The sequence is that of Small ribosomal subunit protein uS4c (rps4) from Agrostis stolonifera (Creeping bentgrass).